Consider the following 1375-residue polypeptide: Ubiquitin carboxyl-terminal hydrolase 47 (1375 aa).

An N6-acetyllysine modification is found at K122. The USP domain maps to 188-564 (VGLVNQAMTC…NAYMLIYRLK (377 aa)). The active-site Nucleophile is C197. Residues 425 to 452 (DEKSPQTESCTDSGAENEGSCHSDQMSN) are disordered. Positions 430–452 (QTESCTDSGAENEGSCHSDQMSN) are enriched in polar residues. The Proton acceptor role is filled by H503. S832 bears the Phosphoserine mark. 3 disordered regions span residues 840–859 (TAYQ…CERV), 880–968 (LKSL…SHSS), and 983–1024 (NGLD…ESGK). Residues 882–899 (SLSLQQQQDGDNGDSSKS) show a composition bias toward low complexity. A Phosphoserine modification is found at S910. Over residues 912 to 928 (LNERDSSASVDNRELEQ) the composition is skewed to basic and acidic residues. Over residues 929–938 (HIQTSDPENF) the composition is skewed to polar residues. S933 carries the phosphoserine modification. The span at 940 to 950 (SEERSDSDVNN) shows a compositional bias: basic and acidic residues. A compositionally biased stretch (low complexity) spans 953 to 968 (STSSVDSDILSSSHSS). Residues 997-1006 (KANEGKKETW) are compositionally biased toward basic and acidic residues. Residues 1007 to 1020 (DTAEEDSGTDSEYD) show a composition bias toward acidic residues. S1013 carries the post-translational modification Phosphoserine. The residue at position 1015 (T1015) is a Phosphothreonine. S1017 bears the Phosphoserine mark.

Belongs to the peptidase C19 family. Interacts with BTRC and FBXW11. Interacts with POLB. Expressed in skeletal muscle, heart and testis.

Its subcellular location is the cytoplasm. The catalysed reaction is Thiol-dependent hydrolysis of ester, thioester, amide, peptide and isopeptide bonds formed by the C-terminal Gly of ubiquitin (a 76-residue protein attached to proteins as an intracellular targeting signal).. Functionally, ubiquitin-specific protease that specifically deubiquitinates monoubiquitinated DNA polymerase beta (POLB), stabilizing POLB thereby playing a role in base-excision repair (BER). Acts as a regulator of cell growth and genome integrity. May also indirectly regulate CDC25A expression at a transcriptional level. The protein is Ubiquitin carboxyl-terminal hydrolase 47 (USP47) of Homo sapiens (Human).